We begin with the raw amino-acid sequence, 163 residues long: MEQYRRAGSVELPASSPMPQLPPDTLEMRVRDGSKIRNLLGLALGRLEGGSTRHVVFSGSGRAAGKAVSCAEIVKRRVPGLHQLTKLRFLQTEDSWVPTSPDTGLDPLTVRRHVPAVWVLLSRDPLDPSECGYQPPGAPPGLGSIPSPSCGPRPRRRARDTRS.

Disordered stretches follow at residues 1–24 (MEQYRRAGSVELPASSPMPQLPPD) and 126–163 (LDPSECGYQPPGAPPGLGSIPSPSCGPRPRRRARDTRS). A compositionally biased stretch (basic residues) spans 153–163 (RPRRRARDTRS).

Belongs to the histone-like Alba family.

The protein resides in the nucleus. May be a component of ribonuclease P or MRP. The polypeptide is Ribonuclease P protein subunit p25-like protein (Rpp25l) (Mus musculus (Mouse)).